A 185-amino-acid chain; its full sequence is Peptide deformylase 2 (185 aa).

Residues Cys108 and His150 each contribute to the Fe cation site. Glu151 is a catalytic residue. His154 serves as a coordination point for Fe cation.

The protein belongs to the polypeptide deformylase family. Requires Fe(2+) as cofactor.

The catalysed reaction is N-terminal N-formyl-L-methionyl-[peptide] + H2O = N-terminal L-methionyl-[peptide] + formate. Its function is as follows. Removes the formyl group from the N-terminal Met of newly synthesized proteins. Requires at least a dipeptide for an efficient rate of reaction. N-terminal L-methionine is a prerequisite for activity but the enzyme has broad specificity at other positions. The chain is Peptide deformylase 2 from Nitrosomonas europaea (strain ATCC 19718 / CIP 103999 / KCTC 2705 / NBRC 14298).